A 244-amino-acid chain; its full sequence is Orotidine 5'-phosphate decarboxylase (244 aa).

Residues D12, K34, 61–70 (DLKLFDIPNT), T125, R187, Q196, G216, and R217 each bind substrate. The Proton donor role is filled by K63.

It belongs to the OMP decarboxylase family. Type 1 subfamily. As to quaternary structure, homodimer.

It catalyses the reaction orotidine 5'-phosphate + H(+) = UMP + CO2. It participates in pyrimidine metabolism; UMP biosynthesis via de novo pathway; UMP from orotate: step 2/2. Its function is as follows. Catalyzes the decarboxylation of orotidine 5'-monophosphate (OMP) to uridine 5'-monophosphate (UMP). This is Orotidine 5'-phosphate decarboxylase from Dictyoglomus thermophilum (strain ATCC 35947 / DSM 3960 / H-6-12).